We begin with the raw amino-acid sequence, 216 residues long: Somatotropin (216 aa).

Positions 1 to 26 are cleaved as a signal peptide; it reads MAAGPRTSMLLAFALLCLPWTQEVGA. H45 is a binding site for Zn(2+). A disulfide bond links C78 and C189. S131 is subject to Phosphoserine. A Zn(2+)-binding site is contributed by E198. Cysteines 206 and 214 form a disulfide.

Belongs to the somatotropin/prolactin family.

It is found in the secreted. In terms of biological role, plays an important role in growth control. Its major role in stimulating body growth is to stimulate the liver and other tissues to secrete IGF1. It stimulates both the differentiation and proliferation of myoblasts. It also stimulates amino acid uptake and protein synthesis in muscle and other tissues. The protein is Somatotropin (GH1) of Delphinus delphis (Short-beaked common dolphin).